A 506-amino-acid chain; its full sequence is Histidine ammonia-lyase (506 aa).

Positions 143 to 145 (ASG) form a cross-link, 5-imidazolinone (Ala-Gly). 2,3-didehydroalanine (Ser) is present on serine 144.

This sequence belongs to the PAL/histidase family. Contains an active site 4-methylidene-imidazol-5-one (MIO), which is formed autocatalytically by cyclization and dehydration of residues Ala-Ser-Gly.

It localises to the cytoplasm. It carries out the reaction L-histidine = trans-urocanate + NH4(+). It participates in amino-acid degradation; L-histidine degradation into L-glutamate; N-formimidoyl-L-glutamate from L-histidine: step 1/3. This Salmonella agona (strain SL483) protein is Histidine ammonia-lyase.